The following is a 425-amino-acid chain: Histidine--tRNA ligase (425 aa).

It belongs to the class-II aminoacyl-tRNA synthetase family. Homodimer.

Its subcellular location is the cytoplasm. It catalyses the reaction tRNA(His) + L-histidine + ATP = L-histidyl-tRNA(His) + AMP + diphosphate + H(+). This chain is Histidine--tRNA ligase, found in Listeria monocytogenes serovar 1/2a (strain ATCC BAA-679 / EGD-e).